Here is a 377-residue protein sequence, read N- to C-terminus: MDLSDLVQLYSDGIPQPTITPPTQNKDELNKNNNNKNKIIRHKGGNKNNRNNKNNVDNNNNNNNNNNNNEKQNQTNVNNEKITNTETLEIKKNNNNNNNNNNNNNNNNNNNNNNKNKYNKFNDNNNKKNKRNNDDDDDKEEMKRIKLFNQRLKEIKIQESPEDIARYLEERRRRYPSKANIEAKKKEEEDARKRGELLYNNNNNSKKKQTPDKKKKLENQTSKNNNKSSTTKTELTNTTTNTSSTTNPTTDTTTTTTNVVSIQKENENQEKENNDNDNDNEPIEVPSTLEFNKFEEKPIKEVKVNTASSNKRNKKRNNPKKVKEEPQVNKFQDSLFTKLFERDISAENNIILQCFRHFANKINQINGNDKLDEKKEI.

Disordered stretches follow at residues 10-79 (YSDG…NVNN), 91-141 (KKNN…DKEE), 182-257 (EAKK…TTTT), 265-284 (ENEN…EPIE), and 289-326 (LEFN…KEEP). Low complexity-rich tracts occupy residues 14 to 24 (IPQPTITPPTQ), 46 to 79 (NKNN…NVNN), and 93 to 124 (NNNN…FNDN). Composition is skewed to basic and acidic residues over residues 182–196 (EAKK…KRGE) and 209–218 (QTPDKKKKLE). Low complexity predominate over residues 221–257 (TSKNNNKSSTTKTELTNTTTNTSSTTNPTTDTTTTTT). Composition is skewed to basic and acidic residues over residues 265-274 (ENENQEKENN) and 292-303 (NKFEEKPIKEVK). Residues 311–320 (KRNKKRNNPK) show a composition bias toward basic residues.

This is an uncharacterized protein from Dictyostelium discoideum (Social amoeba).